A 401-amino-acid chain; its full sequence is E3 ubiquitin-protein ligase RGLG4 (401 aa).

The segment at 1-43 (MTMGNFLKRFGSGKSRSSRNMTLGTTSSQSHEPSPSDPSLSLA) is disordered. The segment covering 8 to 19 (KRFGSGKSRSSR) has biased composition (low complexity). The segment covering 20–32 (NMTLGTTSSQSHE) has biased composition (polar residues). Residues 79-299 (NLILGVDFTK…KETAFALAAL (221 aa)) form the VWFA domain. The interval 326-350 (VPRPPPIPYTPPTNAELPSTASPAS) is disordered. Pro residues predominate over residues 327-336 (PRPPPIPYTP). Residues 341–350 (ELPSTASPAS) are compositionally biased toward polar residues. An RING-type zinc finger spans residues 357–390 (CPICLTNRKDVAFSCGHMTCGDCGSKISNCPICR).

Interacts with UBC30, GRXS17 and GLB3. As to expression, widely expressed.

The protein localises to the cytoplasm. It localises to the nucleus. It carries out the reaction S-ubiquitinyl-[E2 ubiquitin-conjugating enzyme]-L-cysteine + [acceptor protein]-L-lysine = [E2 ubiquitin-conjugating enzyme]-L-cysteine + N(6)-ubiquitinyl-[acceptor protein]-L-lysine.. Functionally, possesses E3 ubiquitin-protein ligase in vitro. Acts as upstream modulator of jasmonate (JA) signaling in response to various stimuli, such as JA-inhibited root growth, JA-inductive gene expression, coronatine-mediated pathogen susceptibility, wound-stimulated expression of JA-responsive genes and wound-induced JA biosynthesis. Controls fumonisin B1 (FB1)-triggered programmed cell death (PCD) by modulating the JA signaling pathway. May mediate salicylic acid (SA) suppression of JA signaling in FB1-induced responses. May mediate the formation of 'Lys-48'-linked multiubiquitin chains. Mediates the polyubiquitination and subsequent proteasomal degradation of the target protein GRXS17. The chain is E3 ubiquitin-protein ligase RGLG4 from Arabidopsis thaliana (Mouse-ear cress).